The sequence spans 632 residues: SH2B adapter protein 2 (632 aa).

A Phosphotyrosine modification is found at Tyr-52. Ser-141 carries the phosphoserine modification. A PH domain is found at 193–306; sequence DIQREGALRF…WVADIQGCVD (114 aa). The residue at position 310 (Ser-310) is a Phosphoserine. Positions 381–409 are disordered; sequence TLESPGGSGSDSNNTGEQGAETDPEAEPE. The span at 400–409 shows a compositional bias: acidic residues; that stretch reads AETDPEAEPE. In terms of domain architecture, SH2 spans 417 to 515; that stretch reads WFHGTLSRVK…SADITLRSYV (99 aa). Disordered stretches follow at residues 516–537 and 558–632; these read RAQD…SPAC and ASPS…YSFY. The span at 519–532 shows a compositional bias: pro residues; that stretch reads DPPPEPGPTPPAAP. Composition is skewed to low complexity over residues 558–579 and 604–626; these read ASPS…AASG and EAVA…RAVE. Residue Tyr-629 is modified to Phosphotyrosine.

This sequence belongs to the SH2B adapter family. As to quaternary structure, homodimer. Interacts with KIT/c-KIT, SHC1, EPOR, PDGFR, VAV1 and VAV3. Interacts (via N-terminal region) with SHC1. Interacts (via the phosphorylated C-terminus) with GRB2. Interacts (via its SH2 domain) with EPOR, INSR and KIT. Interacts with GRB2 after B-cell antigen receptor stimulation. Interacts (via PH domain) with VAV3. Interacts with NTRK1, NTRK2 and NTRK3 (phosphorylated); after stimulation of the receptor by its extracellular ligand and subsequent autophosphorylation of the receptor. Binds INSR, GRB2, ASB6 and CAP. Insulin stimulation leads to dissociation of CAP. Binds CBS only when SH2B2/APS has become phosphorylated. INSR binding does not depend on the phosphorylation of SH2B2/APS. Tyrosine phosphorylated by JAK2, KIT and other kinases activated by B-cell receptor in response to stimulation with cytokines, IL3, IL5, PDGF, IGF1, IGF2, CSF2/GM-CSF and cross-linking of the B-cell receptor complex. In terms of tissue distribution, expressed in spleen, prostate, testis, uterus, small intestine and skeletal muscle. Among hematopoietic cell lines, expressed exclusively in B-cells. Not expressed in most tumor cell lines.

The protein resides in the cytoplasm. It is found in the cell membrane. Its function is as follows. Adapter protein for several members of the tyrosine kinase receptor family. Involved in multiple signaling pathways. May be involved in coupling from immunoreceptor to Ras signaling. Acts as a negative regulator of cytokine signaling in collaboration with CBL. Binds to EPOR and suppresses EPO-induced STAT5 activation, possibly through a masking effect on STAT5 docking sites in EPOR. Suppresses PDGF-induced mitogenesis. May induce cytoskeletal reorganization via interaction with VAV3. This Homo sapiens (Human) protein is SH2B adapter protein 2 (SH2B2).